The sequence spans 83 residues: Kappa-actitoxin-Aer3a (83 aa).

The first 22 residues, 1–22 (MKGQMIICLVLIALCMSVVVMA), serve as a signal peptide directing secretion. Positions 23–49 (QNLRAEELEKANPKDERVRSFERNQKR) are excised as a propeptide. Residues 51–83 (CKDYLPKSECTQFRCRTSMKYKYTNCKKTCGTC) form the ShKT domain. Disulfide bonds link Cys-51–Cys-83, Cys-60–Cys-76, and Cys-65–Cys-80.

Belongs to the sea anemone type 1 potassium channel toxin family. Type 1a subfamily.

The protein localises to the secreted. The protein resides in the nematocyst. Specifically, dose-dependently and potently blocks the voltage-gated potassium channel Kv1.1/KCNA1 (Ki=1.6 pM). Moderately blocks potassium channel heterotetramers formed by 3 subunits of Kv1.1/KCNA1 and 1 subunit of Kv1.2/KCNA2 (Ki=56 nM) and weakly blocks those formed by 2 subunits of Kv1.1/KCNA1 and 2 subunits of Kv1.2/KCNA2 (Ki=14 nM). In Anemonia erythraea (Sea anemone), this protein is Kappa-actitoxin-Aer3a.